The primary structure comprises 97 residues: DNA/RNA-binding protein Alba 1 (97 aa).

N-acetylserine; by ard1 acetylase is present on Ser2. Positions 16, 17, and 22 each coordinate RNA. Position 16 is an N6,N6,N6-trimethyllysine; alternate (Lys16). Lys16 carries the N6,N6-dimethyllysine; alternate modification. At Lys16 the chain carries N6-acetyllysine; alternate. Lys16 bears the N6-methyllysine; alternate mark. A Deamidated asparagine; partial modification is found at Asn31. Deamidated glutamine; partial is present on Gln32. Position 40 is an N6-methyllysine; partial (Lys40). RNA-binding residues include Arg42 and Arg44. Position 48 is an N6-acetyllysine; partial (Lys48). Asp51 carries the aspartate methyl ester; partial modification. Asn58 carries the post-translational modification Deamidated asparagine; partial. Lys64 is subject to N6-acetyllysine; alternate; partial. An N6-methyllysine; alternate; partial modification is found at Lys64. Lys68 bears the N6-acetyllysine; partial mark. Gln75 is subject to N5-methylglutamine; partial. Asp81 is subject to Aspartate methyl ester; partial. The residue at position 97 (Lys97) is an N6-methyllysine; partial.

It belongs to the histone-like Alba family. In terms of assembly, forms homodimers and higher order oligomers, e.g. homotetramers. Post-translationally, acetylated. Acetylation at Lys-16 by the Pat acetylase decreases DNA-binding affinity. Deacetylation at Lys-16 by the CobB deacetylase increases DNA-binding affinity. Acetylation at Ser-2 is involved in the regulation of the turnover of the protein.

It is found in the cytoplasm. The protein localises to the chromosome. Its function is as follows. Binds double-stranded DNA tightly but without sequence specificity. Involved in DNA compaction. Possesses DNA endonuclease activity. Prevents transcription after DNA binding. Binds single-stranded DNA and RNA in vitro. Binds rRNA and mRNA in vivo. May play a role in maintaining the structural and functional stability of RNA, and, perhaps, ribosomes. Binds double-stranded RNA (dsRNA) and exhibits RNA chaperone activity. Required for normal growth. This chain is DNA/RNA-binding protein Alba 1, found in Saccharolobus islandicus (strain REY15A) (Sulfolobus islandicus).